Here is a 455-residue protein sequence, read N- to C-terminus: Golgi pH regulator (455 aa).

Transmembrane regions (helical) follow at residues 5–25 (IDSSIMVTSQVLFFGFGWLFF) and 46–66 (VTFAFSCTMFELIIFEILGVL). An N-linked (GlcNAc...) asparagine glycan is attached at asparagine 67. 3 consecutive transmembrane segments (helical) span residues 79–99 (LCVILLILVFMVPFYIGYFVV), 111–131 (LFACVLWLTFMYFFWKLGDPF), and 150–170 (VGVIGVTLMALLSGFGAVNCP). N-linked (GlcNAc...) asparagine glycans are attached at residues asparagine 180 and asparagine 243. The next 4 membrane-spanning stretches (helical) occupy residues 290 to 310 (GYFFSIYCVWKIFMATINIVF), 343 to 363 (ISFILVGIIIVTSIRGLLITL), 378 to 398 (VIVLLLAQIMGMYFVSSVLLI), and 425 to 445 (WFDVIFLVSALSSILFLYLAH).

This sequence belongs to the Golgi pH regulator (TC 1.A.38) family. In terms of assembly, homotrimer.

The protein resides in the golgi apparatus membrane. The enzyme catalyses iodide(out) = iodide(in). The catalysed reaction is chloride(in) = chloride(out). It carries out the reaction bromide(in) = bromide(out). It catalyses the reaction fluoride(in) = fluoride(out). Its function is as follows. Voltage-gated channel that enables the transfer of anions such as iodide, chloride, bromide and fluoride which may function in counter-ion conductance and participates in Golgi acidification. This Gallus gallus (Chicken) protein is Golgi pH regulator.